The chain runs to 488 residues: GTPase Der (488 aa).

EngA-type G domains follow at residues 3-166 and 199-372; these read PVVA…AEAM and IKLA…DSAT. GTP-binding positions include 9-16, 56-60, 118-121, 205-212, 252-256, and 317-320; these read GRPNVGKS, DTGGI, NKVD, GKPNVGKS, DTAGV, and NKWD. The KH-like domain maps to 373–457; the sequence is RRVSTSMLTR…PIQLRFQEGD (85 aa). Residues 460–488 are disordered; the sequence is FENKTEKLTMSQERRRKRAQSHIKDRKTK. A compositionally biased stretch (basic residues) spans 473-488; it reads RRRKRAQSHIKDRKTK.

Belongs to the TRAFAC class TrmE-Era-EngA-EngB-Septin-like GTPase superfamily. EngA (Der) GTPase family. As to quaternary structure, associates with the 50S ribosomal subunit.

In terms of biological role, GTPase that plays an essential role in the late steps of ribosome biogenesis. This chain is GTPase Der, found in Shewanella baltica (strain OS223).